The following is a 210-amino-acid chain: Ribosomal RNA large subunit methyltransferase E (210 aa).

Positions 67, 69, 87, 103, and 128 each coordinate S-adenosyl-L-methionine. The active-site Proton acceptor is lysine 168.

Belongs to the class I-like SAM-binding methyltransferase superfamily. RNA methyltransferase RlmE family.

It localises to the cytoplasm. It carries out the reaction uridine(2552) in 23S rRNA + S-adenosyl-L-methionine = 2'-O-methyluridine(2552) in 23S rRNA + S-adenosyl-L-homocysteine + H(+). Functionally, specifically methylates the uridine in position 2552 of 23S rRNA at the 2'-O position of the ribose in the fully assembled 50S ribosomal subunit. In Psychrobacter cryohalolentis (strain ATCC BAA-1226 / DSM 17306 / VKM B-2378 / K5), this protein is Ribosomal RNA large subunit methyltransferase E.